The following is a 417-amino-acid chain: Citrate synthase-related protein DDB_G0287281 (417 aa).

The segment at 284–317 (NKNNNNNNNNNNNNNNNNNNNNNNNNSEDDDDDN) is disordered. Residues 286-309 (NNNNNNNNNNNNNNNNNNNNNNNN) show a composition bias toward low complexity.

The protein belongs to the citrate synthase family.

This is Citrate synthase-related protein DDB_G0287281 from Dictyostelium discoideum (Social amoeba).